The following is a 341-amino-acid chain: HTH-type sugar sensing transcriptional regulator TrmBL1 (341 aa).

Positions 32-53 (SKATDVTKESGIPHTRIYDVLS) form a DNA-binding region, H-T-H motif.

Belongs to the transcriptional regulator TrmB family. Homotetramer. Forms homooctamers in the presence of maltotriose or maltose.

With respect to regulation, repressor activity is regulated by binding of different sugars to TrmBL1. Binding of maltose and maltotriose results in derepression of the target genes. However, high sugar concentration results in formation of octamers with high affinity for DNA, which may prevent transcription of target genes. In terms of biological role, global transcriptional repressor of the maltodextrin transport gene cluster (mdxE operon) and most likely of all genes encoding glycolytic enzymes. Acts by binding to the conserved TGM (Thermococcales-Glycolytic-Motif) sequences in their promoter region. Can also interact with non-TGM sequences. The protein is HTH-type sugar sensing transcriptional regulator TrmBL1 (trmBL1) of Pyrococcus furiosus (strain ATCC 43587 / DSM 3638 / JCM 8422 / Vc1).